Consider the following 435-residue polypeptide: Arginine biosynthesis bifunctional protein ArgJ, mitochondrial (435 aa).

Positions 179, 205, 216, 302, 430, and 435 each coordinate substrate. The active-site Nucleophile is Thr-216.

It belongs to the ArgJ family. As to quaternary structure, heterodimer of an alpha and a beta chain. The alpha and beta chains are autoproteolytically processed from a single precursor protein within the mitochondrion.

It is found in the mitochondrion matrix. The enzyme catalyses N(2)-acetyl-L-ornithine + L-glutamate = N-acetyl-L-glutamate + L-ornithine. It catalyses the reaction L-glutamate + acetyl-CoA = N-acetyl-L-glutamate + CoA + H(+). The protein operates within amino-acid biosynthesis; L-arginine biosynthesis; L-ornithine and N-acetyl-L-glutamate from L-glutamate and N(2)-acetyl-L-ornithine (cyclic): step 1/1. Its pathway is amino-acid biosynthesis; L-arginine biosynthesis; N(2)-acetyl-L-ornithine from L-glutamate: step 1/4. Catalyzes two activities which are involved in the cyclic version of arginine biosynthesis: the synthesis of acetylglutamate from glutamate and acetyl-CoA, and of ornithine by transacetylation between acetylornithine and glutamate. The chain is Arginine biosynthesis bifunctional protein ArgJ, mitochondrial from Schizosaccharomyces japonicus (strain yFS275 / FY16936) (Fission yeast).